We begin with the raw amino-acid sequence, 126 residues long: Profilin-1A (126 aa).

The segment at 2 to 36 (SWQTYVDTNLVGTGAVTQAAILGLDGNTWATSAGF) is actin binding. Lys-104 carries the N6,N6,N6-trimethyllysine modification.

This sequence belongs to the profilin family. Occurs in many kinds of cells as a complex with monomeric actin in a 1:1 ratio.

It is found in the cytoplasm. Its subcellular location is the cytoskeleton. Binds to actin and affects the structure of the cytoskeleton. At high concentrations, profilin prevents the polymerization of actin, whereas it enhances it at low concentrations. By binding to PIP2, it inhibits the formation of IP3 and DG. This Acanthamoeba castellanii (Amoeba) protein is Profilin-1A.